Reading from the N-terminus, the 289-residue chain is Shikimate kinase (289 aa).

84-94 lines the ATP pocket; it reads PMASGLSSSSA.

The protein belongs to the GHMP kinase family. Archaeal shikimate kinase subfamily.

It is found in the cytoplasm. The enzyme catalyses shikimate + ATP = 3-phosphoshikimate + ADP + H(+). The protein operates within metabolic intermediate biosynthesis; chorismate biosynthesis; chorismate from D-erythrose 4-phosphate and phosphoenolpyruvate: step 5/7. The polypeptide is Shikimate kinase (Methanobrevibacter smithii (strain ATCC 35061 / DSM 861 / OCM 144 / PS)).